A 165-amino-acid polypeptide reads, in one-letter code: Thiol peroxidase (165 aa).

Residues 18-164 (RKVGDKAPNF…YEAAIEAAKK (147 aa)) form the Thioredoxin domain. The active-site Cysteine sulfenic acid (-SOH) intermediate is C60. C60 and C94 are disulfide-bonded.

It belongs to the peroxiredoxin family. Tpx subfamily. In terms of assembly, homodimer.

The enzyme catalyses a hydroperoxide + [thioredoxin]-dithiol = an alcohol + [thioredoxin]-disulfide + H2O. Functionally, thiol-specific peroxidase that catalyzes the reduction of hydrogen peroxide and organic hydroperoxides to water and alcohols, respectively. Plays a role in cell protection against oxidative stress by detoxifying peroxides. The sequence is that of Thiol peroxidase from Listeria monocytogenes serovar 1/2a (strain ATCC BAA-679 / EGD-e).